We begin with the raw amino-acid sequence, 440 residues long: NADH-quinone oxidoreductase subunit D (440 aa).

Belongs to the complex I 49 kDa subunit family. NDH-1 is composed of 14 different subunits. Subunits NuoB, C, D, E, F, and G constitute the peripheral sector of the complex.

It is found in the cell membrane. The enzyme catalyses a quinone + NADH + 5 H(+)(in) = a quinol + NAD(+) + 4 H(+)(out). Its function is as follows. NDH-1 shuttles electrons from NADH, via FMN and iron-sulfur (Fe-S) centers, to quinones in the respiratory chain. The immediate electron acceptor for the enzyme in this species is believed to be a menaquinone. Couples the redox reaction to proton translocation (for every two electrons transferred, four hydrogen ions are translocated across the cytoplasmic membrane), and thus conserves the redox energy in a proton gradient. The chain is NADH-quinone oxidoreductase subunit D from Acidothermus cellulolyticus (strain ATCC 43068 / DSM 8971 / 11B).